A 55-amino-acid chain; its full sequence is Large ribosomal subunit protein bL33c (55 aa).

It belongs to the bacterial ribosomal protein bL33 family.

The protein resides in the plastid. Its subcellular location is the chloroplast. The polypeptide is Large ribosomal subunit protein bL33c (Emiliania huxleyi (Coccolithophore)).